A 145-amino-acid polypeptide reads, in one-letter code: MLMPKQMKYRRPHRPRNIKGIAQRGATVAFGDFGLVSLEAGWITSRQIESARRTITNYVKRGGKVWIRIFPDRPITQKPAETRMGSGKGSVEYYVAVIKPGRVLFELNGVPEDVAQEALRRAAQKLPVKCKFVTKASQEVGSNEG.

The protein belongs to the universal ribosomal protein uL16 family. Part of the 50S ribosomal subunit.

Functionally, binds 23S rRNA and is also seen to make contacts with the A and possibly P site tRNAs. This chain is Large ribosomal subunit protein uL16, found in Herpetosiphon aurantiacus (strain ATCC 23779 / DSM 785 / 114-95).